The primary structure comprises 282 residues: 4-hydroxybenzoate octaprenyltransferase (282 aa).

9 helical membrane passes run 17–37, 40–60, 90–110, 113–133, 135–155, 163–183, 207–227, 231–251, and 262–282; these read IGIL…NQGF, IDLL…GCVI, AFIL…KLPI, FYFA…KRFL, APQL…FIAS, FIVL…MYAM, LIIA…AINK, WFFY…LKLI, and AFLV…LALI.

Belongs to the UbiA prenyltransferase family. Mg(2+) is required as a cofactor.

It localises to the cell inner membrane. It catalyses the reaction all-trans-octaprenyl diphosphate + 4-hydroxybenzoate = 4-hydroxy-3-(all-trans-octaprenyl)benzoate + diphosphate. The protein operates within cofactor biosynthesis; ubiquinone biosynthesis. Catalyzes the prenylation of para-hydroxybenzoate (PHB) with an all-trans polyprenyl group. Mediates the second step in the final reaction sequence of ubiquinone-8 (UQ-8) biosynthesis, which is the condensation of the polyisoprenoid side chain with PHB, generating the first membrane-bound Q intermediate 3-octaprenyl-4-hydroxybenzoate. This Legionella pneumophila subsp. pneumophila (strain Philadelphia 1 / ATCC 33152 / DSM 7513) protein is 4-hydroxybenzoate octaprenyltransferase.